Reading from the N-terminus, the 199-residue chain is MKRTRAGFTLLEMLVAIAIFASLALMAQQVTNGVTRVNSAVADHDQKLNLMQQTMSFLTHDLTQMMPRPVRGDQGQREPALLAGAGVLASESEGMRFVRGGVVNPLMRLPRSNLLTVGYRIHDGYLERLAWPLTDAAGSVKPTMQKLIPADSLRLQFYDGTRWQESWSSVQAIPVAVRMTLHSPQWGEIERIWLLRGPQ.

Residues 1-7 (MKRTRAG) constitute a propeptide, leader sequence. F8 carries the N-methylphenylalanine modification. Residues 8-27 (FTLLEMLVAIAIFASLALMA) form a helical membrane-spanning segment.

It belongs to the GSP J family. In terms of assembly, type II secretion is composed of four main components: the outer membrane complex, the inner membrane complex, the cytoplasmic secretion ATPase and the periplasm-spanning pseudopilus. Interacts with core component GspG. Interacts with pseudopilins GspI and GspK. Cleaved by prepilin peptidase. Post-translationally, methylated by prepilin peptidase at the amino group of the N-terminal phenylalanine once the leader sequence is cleaved by prepilin peptidase.

The protein resides in the cell inner membrane. In terms of biological role, component of the type II secretion system required for the energy-dependent secretion of extracellular factors such as proteases and toxins from the periplasm. Part of the pseudopilus tip complex that is critical for the recognition and binding of secretion substrates. This Escherichia coli protein is Type II secretion system protein J (gspJ).